The chain runs to 242 residues: tRNA pseudouridine synthase A (242 aa).

D51 (nucleophile) is an active-site residue. Y107 provides a ligand contact to substrate.

It belongs to the tRNA pseudouridine synthase TruA family. Homodimer.

It catalyses the reaction uridine(38/39/40) in tRNA = pseudouridine(38/39/40) in tRNA. Its function is as follows. Formation of pseudouridine at positions 38, 39 and 40 in the anticodon stem and loop of transfer RNAs. The protein is tRNA pseudouridine synthase A of Helicobacter pylori (strain ATCC 700392 / 26695) (Campylobacter pylori).